Reading from the N-terminus, the 518-residue chain is Cytochrome P450 704C1 (518 aa).

A run of 2 helical transmembrane segments spans residues 5–25 (ILTM…WIAS) and 299–319 (VILN…SWFI). A heme-binding site is contributed by Cys461.

It belongs to the cytochrome P450 family. Heme is required as a cofactor.

Its subcellular location is the membrane. The protein is Cytochrome P450 704C1 (CYP704C1) of Pinus taeda (Loblolly pine).